The sequence spans 120 residues: Seripauperin-2 (120 aa).

The helical transmembrane segment at 7–24 threads the bilayer; that stretch reads IAAGVAAIAATASATTTL.

This sequence belongs to the SRP1/TIP1 family. Seripauperin subfamily.

The protein localises to the membrane. This chain is Seripauperin-2 (PAU2), found in Saccharomyces cerevisiae (strain ATCC 204508 / S288c) (Baker's yeast).